The chain runs to 268 residues: Calpain small subunit 1 (268 aa).

Position 1 is an N-acetylmethionine (Met1). Phosphoserine is present on Ser6. The 35-residue stretch at 91–125 (EANESEEVRQFRRLFAQLAGDDMEVSATELMNILN) folds into the EF-hand 1; atypical domain. Ala109, Asp112, Glu114, Glu119, Asp137, Asp152, Asp154, Thr156, Lys158, and Glu163 together coordinate Ca(2+). 4 EF-hand domains span residues 139 to 172 (FGIDTCRSMVAVMDSDTTGKLGFEEFKYLWNNIK), 169 to 204 (NNIKRWQAIYKQFDTDRSGTICSSELPGAFEAAGFH), 205 to 233 (LNEHLYNMIIRRYSDESGNMDFDNFISCL), and 234 to 268 (VRLDAMFRAFKSLDKDGTGQIQVNIQEWLQLTMYS). Lys179 carries the post-translational modification N6-acetyllysine. Residues Asp182, Asp184, Ser186, Thr188, Glu193, and Asp225 each contribute to the Ca(2+) site.

In terms of assembly, homodimer or heterodimer of a large (catalytic) and a small (regulatory) subunit. In presence of calcium, the heterodimer dissociates.

Its subcellular location is the cytoplasm. It localises to the cell membrane. Functionally, regulatory subunit of the calcium-regulated non-lysosomal thiol-protease which catalyzes limited proteolysis of substrates involved in cytoskeletal remodeling and signal transduction. Essential for embryonic development. This chain is Calpain small subunit 1 (CAPNS1), found in Homo sapiens (Human).